Here is a 532-residue protein sequence, read N- to C-terminus: O-phosphoserine--tRNA(Cys) ligase (532 aa).

Substrate-binding positions include 188-190 (HMT), 233-235 (SAS), 275-276 (YY), and Asn327.

It belongs to the class-II aminoacyl-tRNA synthetase family. O-phosphoseryl-tRNA(Cys) synthetase subfamily. Homotetramer. Interacts with SepCysS.

The catalysed reaction is tRNA(Cys) + O-phospho-L-serine + ATP = O-phospho-L-seryl-tRNA(Cys) + AMP + diphosphate. In terms of biological role, catalyzes the attachment of O-phosphoserine (Sep) to tRNA(Cys). This chain is O-phosphoserine--tRNA(Cys) ligase, found in Methanocella arvoryzae (strain DSM 22066 / NBRC 105507 / MRE50).